Consider the following 262-residue polypeptide: DNA-directed RNA polymerase subunit Rpo3 (262 aa).

It belongs to the archaeal Rpo3/eukaryotic RPB3 RNA polymerase subunit family. In terms of assembly, part of the RNA polymerase complex.

It is found in the cytoplasm. It catalyses the reaction RNA(n) + a ribonucleoside 5'-triphosphate = RNA(n+1) + diphosphate. In terms of biological role, DNA-dependent RNA polymerase (RNAP) catalyzes the transcription of DNA into RNA using the four ribonucleoside triphosphates as substrates. The protein is DNA-directed RNA polymerase subunit Rpo3 of Pyrobaculum islandicum (strain DSM 4184 / JCM 9189 / GEO3).